The following is a 277-amino-acid chain: Thiazole synthase (277 aa).

The active-site Schiff-base intermediate with DXP is the Lys-116. Residues Gly-177, 203–204 (AG), and 225–226 (NT) each bind 1-deoxy-D-xylulose 5-phosphate.

This sequence belongs to the ThiG family. As to quaternary structure, homotetramer. Forms heterodimers with either ThiH or ThiS.

Its subcellular location is the cytoplasm. It carries out the reaction [ThiS sulfur-carrier protein]-C-terminal-Gly-aminoethanethioate + 2-iminoacetate + 1-deoxy-D-xylulose 5-phosphate = [ThiS sulfur-carrier protein]-C-terminal Gly-Gly + 2-[(2R,5Z)-2-carboxy-4-methylthiazol-5(2H)-ylidene]ethyl phosphate + 2 H2O + H(+). Its pathway is cofactor biosynthesis; thiamine diphosphate biosynthesis. Its function is as follows. Catalyzes the rearrangement of 1-deoxy-D-xylulose 5-phosphate (DXP) to produce the thiazole phosphate moiety of thiamine. Sulfur is provided by the thiocarboxylate moiety of the carrier protein ThiS. In vitro, sulfur can be provided by H(2)S. The polypeptide is Thiazole synthase (Thermosynechococcus vestitus (strain NIES-2133 / IAM M-273 / BP-1)).